Consider the following 909-residue polypeptide: Phosphoenolpyruvate carboxylase (909 aa).

Active-site residues include H138 and K572.

It belongs to the PEPCase type 1 family. It depends on Mg(2+) as a cofactor.

The catalysed reaction is oxaloacetate + phosphate = phosphoenolpyruvate + hydrogencarbonate. Forms oxaloacetate, a four-carbon dicarboxylic acid source for the tricarboxylic acid cycle. The polypeptide is Phosphoenolpyruvate carboxylase (Lactobacillus delbrueckii subsp. bulgaricus (strain ATCC 11842 / DSM 20081 / BCRC 10696 / JCM 1002 / NBRC 13953 / NCIMB 11778 / NCTC 12712 / WDCM 00102 / Lb 14)).